The following is a 280-amino-acid chain: Transcription factor HES-1 (280 aa).

The disordered stretch occupies residues 1 to 44 (MPADIMEKNSSSPVAATPASVNTTPDKPKTASEHRKSSKPIMEK). Low complexity predominate over residues 10–21 (SSSPVAATPASV). The span at 26–35 (DKPKTASEHR) shows a compositional bias: basic and acidic residues. The bHLH domain maps to 34–91 (HRKSSKPIMEKRRRARINESLSQLKTLILDALKKDSSRHSKLEKADILEMTVKHLRNL). Residues 110–143 (YRAGFSECMNEVTRFLSTCEGVNTEVRTRLLGHL) enclose the Orange domain. 2 disordered regions span residues 157–200 (GQPH…PPGG) and 254–280 (TSVG…PWRN). Pro residues-rich tracts occupy residues 164-174 (QAPPPPPPGPG) and 181-200 (FAPP…PPGG). The span at 254–271 (TSVGPNAVSPSSGPSLTA) shows a compositional bias: polar residues. Residues 275 to 278 (WRPW) carry the WRPW motif motif.

As to quaternary structure, transcription repression requires formation of a complex with a corepressor protein of the Groucho/TLE family. Interacts (via WPRW motif) with TLE1, and more weakly with TLE2. Interacts with HES6. Interacts with SIRT1. Interacts with an FA complex, composed of FANCA, FANCF, FANCG and FANCL, but not of FANCC, nor FANCE. Post-translationally, (Microbial infection) Ubiquitinated via human cytomegalovirus/HCMV protein IE1 that assembles a HES1 ubiquitination complex; leading to HES1 proteasomal degradation.

It localises to the nucleus. Transcriptional repressor of genes that require a bHLH protein for their transcription. May act as a negative regulator of myogenesis by inhibiting the functions of MYOD1 and ASH1. Binds DNA on N-box motifs: 5'-CACNAG-3' with high affinity and on E-box motifs: 5'-CANNTG-3' with low affinity. May play a role in a functional FA core complex response to DNA cross-link damage, being required for the stability and nuclear localization of FA core complex proteins, as well as for FANCD2 monoubiquitination in response to DNA damage. The protein is Transcription factor HES-1 (HES1) of Homo sapiens (Human).